The sequence spans 73 residues: Exodeoxyribonuclease 7 small subunit (73 aa).

The protein belongs to the XseB family. As to quaternary structure, heterooligomer composed of large and small subunits.

It is found in the cytoplasm. The enzyme catalyses Exonucleolytic cleavage in either 5'- to 3'- or 3'- to 5'-direction to yield nucleoside 5'-phosphates.. Bidirectionally degrades single-stranded DNA into large acid-insoluble oligonucleotides, which are then degraded further into small acid-soluble oligonucleotides. The chain is Exodeoxyribonuclease 7 small subunit from Streptococcus mutans serotype c (strain ATCC 700610 / UA159).